The sequence spans 129 residues: Succinate dehydrogenase subunit 3-1, mitochondrial (129 aa).

A mitochondrion-targeting transit peptide spans methionine 1–arginine 58. A compositionally biased stretch (low complexity) spans glycine 25 to aspartate 35. Positions glycine 25–alanine 80 are disordered. Residue histidine 87 participates in heme binding. The chain crosses the membrane as a helical span at residues isoleucine 105–phenylalanine 127.

In terms of assembly, component of complex II composed of eight subunits in plants: four classical SDH subunits SDH1, SDH2, SDH3 and SDH4 (a flavoprotein (FP), an iron-sulfur protein (IP), and a cytochrome b composed of a large and a small subunit.), as well as four subunits unknown in mitochondria from bacteria and heterotrophic eukaryotes. The cofactor is heme.

The protein resides in the mitochondrion inner membrane. It participates in carbohydrate metabolism; tricarboxylic acid cycle. Membrane-anchoring subunit of succinate dehydrogenase (SDH). This Oryza sativa subsp. japonica (Rice) protein is Succinate dehydrogenase subunit 3-1, mitochondrial.